The following is a 250-amino-acid chain: Osmotin-like protein OSML15 (250 aa).

Residues 1–21 (MSHLTTCLVFFLLAFVTYTNA) form the signal peptide. Disulfide bonds link cysteine 31–cysteine 226, cysteine 73–cysteine 83, cysteine 88–cysteine 94, cysteine 142–cysteine 214, cysteine 147–cysteine 197, cysteine 155–cysteine 165, cysteine 169–cysteine 178, and cysteine 179–cysteine 184.

The protein belongs to the thaumatin family.

In Solanum commersonii (Commerson's wild potato), this protein is Osmotin-like protein OSML15.